Reading from the N-terminus, the 161-residue chain is Endoribonuclease YbeY (161 aa).

Histidine 120, histidine 124, and aspartate 130 together coordinate Zn(2+).

It belongs to the endoribonuclease YbeY family. The cofactor is Zn(2+).

The protein resides in the cytoplasm. Single strand-specific metallo-endoribonuclease involved in late-stage 70S ribosome quality control and in maturation of the 3' terminus of the 16S rRNA. The sequence is that of Endoribonuclease YbeY from Chlamydia trachomatis serovar A (strain ATCC VR-571B / DSM 19440 / HAR-13).